The primary structure comprises 244 residues: Phosphate propanoyltransferase (244 aa).

Residue 52–54 (ISA) participates in CoA binding. Zn(2+) contacts are provided by histidine 56 and histidine 58. A CoA-binding site is contributed by arginine 106. Arginine 112 is a binding site for phosphate. Residues glutamate 118, histidine 166, histidine 168, and histidine 214 each coordinate Zn(2+). Asparagine 221 provides a ligand contact to CoA.

It belongs to the PduL family. In terms of assembly, full-length protein forms large oligomers. Possible homotrimer and monomer, when purified in the absence of the encapsulation peptide (EP, residues 1-20). The EP may influence oligomerization. Zn(2+) serves as cofactor.

It localises to the bacterial microcompartment. It catalyses the reaction propanoyl-CoA + phosphate = propanoyl phosphate + CoA. Functionally, part of a bacterial microcompartment (BMC) locus required for growth on plant and algal sugars, including L-fucose and L-rhamnose. Thought to be active on lactyl-CoA in a lactaldehyde-degradation pathway. CoA is regenerated within the BMC via this enzyme, although there must also be cofactor transport across the BMC. Directly targeted to the BMC. This chain is Phosphate propanoyltransferase, found in Planctopirus limnophila (strain ATCC 43296 / DSM 3776 / IFAM 1008 / Mu 290) (Planctomyces limnophilus).